We begin with the raw amino-acid sequence, 312 residues long: DNA-directed RNA polymerase subunit alpha (312 aa).

The alpha N-terminal domain (alpha-NTD) stretch occupies residues 1–226 (MIEFEKPIIT…EHLNLFTDLT (226 aa)). The segment at 242–312 (NDEKVLDRTI…DLGLGLKNDK (71 aa)) is alpha C-terminal domain (alpha-CTD).

Belongs to the RNA polymerase alpha chain family. In terms of assembly, homodimer. The RNAP catalytic core consists of 2 alpha, 1 beta, 1 beta' and 1 omega subunit. When a sigma factor is associated with the core the holoenzyme is formed, which can initiate transcription.

The enzyme catalyses RNA(n) + a ribonucleoside 5'-triphosphate = RNA(n+1) + diphosphate. In terms of biological role, DNA-dependent RNA polymerase catalyzes the transcription of DNA into RNA using the four ribonucleoside triphosphates as substrates. The protein is DNA-directed RNA polymerase subunit alpha of Streptococcus agalactiae serotype Ia (strain ATCC 27591 / A909 / CDC SS700).